We begin with the raw amino-acid sequence, 270 residues long: Putative pyruvate, phosphate dikinase regulatory protein (270 aa).

147–154 provides a ligand contact to ADP; it reads GVSRSSKT.

The protein belongs to the pyruvate, phosphate/water dikinase regulatory protein family. PDRP subfamily.

The catalysed reaction is N(tele)-phospho-L-histidyl/L-threonyl-[pyruvate, phosphate dikinase] + ADP = N(tele)-phospho-L-histidyl/O-phospho-L-threonyl-[pyruvate, phosphate dikinase] + AMP + H(+). The enzyme catalyses N(tele)-phospho-L-histidyl/O-phospho-L-threonyl-[pyruvate, phosphate dikinase] + phosphate + H(+) = N(tele)-phospho-L-histidyl/L-threonyl-[pyruvate, phosphate dikinase] + diphosphate. Functionally, bifunctional serine/threonine kinase and phosphorylase involved in the regulation of the pyruvate, phosphate dikinase (PPDK) by catalyzing its phosphorylation/dephosphorylation. In Citrifermentans bemidjiense (strain ATCC BAA-1014 / DSM 16622 / JCM 12645 / Bem) (Geobacter bemidjiensis), this protein is Putative pyruvate, phosphate dikinase regulatory protein.